The following is a 214-amino-acid chain: GTP-binding nuclear protein GSP1/Ran (214 aa).

In terms of domain architecture, Small GTPase Ran-type spans E4–N168. Position 15-22 (D15–T22) interacts with GTP. Residues K34–V42 are switch-I. Residues G65, N119–D122, and S147–K149 each bind GTP. Positions G65–Q81 are switch-II.

It belongs to the small GTPase superfamily. Ran family. As to quaternary structure, found in a nuclear export complex with RanGTP, exportin and pre-miRNA.

The protein localises to the nucleus. GTP-binding protein involved in nucleocytoplasmic transport. Required for the import of protein into the nucleus and also for RNA export. Involved in chromatin condensation and control of cell cycle. This chain is GTP-binding nuclear protein GSP1/Ran (GSP1), found in Candida glabrata (strain ATCC 2001 / BCRC 20586 / JCM 3761 / NBRC 0622 / NRRL Y-65 / CBS 138) (Yeast).